The chain runs to 75 residues: Large ribosomal subunit protein uL29 (75 aa).

This sequence belongs to the universal ribosomal protein uL29 family.

The sequence is that of Large ribosomal subunit protein uL29 from Pyrobaculum aerophilum (strain ATCC 51768 / DSM 7523 / JCM 9630 / CIP 104966 / NBRC 100827 / IM2).